The primary structure comprises 1879 residues: Protein TIC 214 (1879 aa).

The next 6 helical transmembrane spans lie at 18–38, 67–87, 90–110, 127–147, 175–195, and 218–238; these read IINS…FSIG, FITG…HLAL, PHTI…WNNH, LSIQ…HFIL, VGWL…LVWI, and IFSI…PSPI. The tract at residues 243-291 is disordered; the sequence is LKETEERGESEEERDVEKTSETKGTKQEQEGSTEEDPSPSLFSEEKEDP. Positions 257-271 are enriched in basic and acidic residues; sequence DVEKTSETKGTKQEQ.

The protein belongs to the TIC214 family. In terms of assembly, part of the Tic complex.

It is found in the plastid. It localises to the chloroplast inner membrane. Involved in protein precursor import into chloroplasts. May be part of an intermediate translocation complex acting as a protein-conducting channel at the inner envelope. This is Protein TIC 214 from Morus indica (Mulberry).